Here is a 371-residue protein sequence, read N- to C-terminus: Queuine tRNA-ribosyltransferase (371 aa).

The active-site Proton acceptor is the D89. Substrate is bound by residues D89–F93, D143, Q185, and G212. The segment at G243–D249 is RNA binding. The active-site Nucleophile is the D262. Positions T267–R271 are RNA binding; important for wobble base 34 recognition. Residues C300, C302, C305, and H331 each contribute to the Zn(2+) site.

This sequence belongs to the queuine tRNA-ribosyltransferase family. In terms of assembly, homodimer. Within each dimer, one monomer is responsible for RNA recognition and catalysis, while the other monomer binds to the replacement base PreQ1. The cofactor is Zn(2+).

It carries out the reaction 7-aminomethyl-7-carbaguanine + guanosine(34) in tRNA = 7-aminomethyl-7-carbaguanosine(34) in tRNA + guanine. Its pathway is tRNA modification; tRNA-queuosine biosynthesis. Catalyzes the base-exchange of a guanine (G) residue with the queuine precursor 7-aminomethyl-7-deazaguanine (PreQ1) at position 34 (anticodon wobble position) in tRNAs with GU(N) anticodons (tRNA-Asp, -Asn, -His and -Tyr). Catalysis occurs through a double-displacement mechanism. The nucleophile active site attacks the C1' of nucleotide 34 to detach the guanine base from the RNA, forming a covalent enzyme-RNA intermediate. The proton acceptor active site deprotonates the incoming PreQ1, allowing a nucleophilic attack on the C1' of the ribose to form the product. After dissociation, two additional enzymatic reactions on the tRNA convert PreQ1 to queuine (Q), resulting in the hypermodified nucleoside queuosine (7-(((4,5-cis-dihydroxy-2-cyclopenten-1-yl)amino)methyl)-7-deazaguanosine). The protein is Queuine tRNA-ribosyltransferase of Azotobacter vinelandii (strain DJ / ATCC BAA-1303).